Consider the following 200-residue polypeptide: Large ribosomal subunit protein uL4 (200 aa).

Residues 43–71 are disordered; the sequence is RAQKTRAEVSGSGKKPWRQKGTGRARSGD.

This sequence belongs to the universal ribosomal protein uL4 family. Part of the 50S ribosomal subunit.

In terms of biological role, one of the primary rRNA binding proteins, this protein initially binds near the 5'-end of the 23S rRNA. It is important during the early stages of 50S assembly. It makes multiple contacts with different domains of the 23S rRNA in the assembled 50S subunit and ribosome. Forms part of the polypeptide exit tunnel. The sequence is that of Large ribosomal subunit protein uL4 from Aggregatibacter actinomycetemcomitans (Actinobacillus actinomycetemcomitans).